Here is a 165-residue protein sequence, read N- to C-terminus: Crossover junction endodeoxyribonuclease RuvC (165 aa).

Residues aspartate 7, glutamate 67, and aspartate 140 contribute to the active site. 3 residues coordinate Mg(2+): aspartate 7, glutamate 67, and aspartate 140.

It belongs to the RuvC family. In terms of assembly, homodimer which binds Holliday junction (HJ) DNA. The HJ becomes 2-fold symmetrical on binding to RuvC with unstacked arms; it has a different conformation from HJ DNA in complex with RuvA. In the full resolvosome a probable DNA-RuvA(4)-RuvB(12)-RuvC(2) complex forms which resolves the HJ. The cofactor is Mg(2+).

It is found in the cytoplasm. The enzyme catalyses Endonucleolytic cleavage at a junction such as a reciprocal single-stranded crossover between two homologous DNA duplexes (Holliday junction).. The RuvA-RuvB-RuvC complex processes Holliday junction (HJ) DNA during genetic recombination and DNA repair. Endonuclease that resolves HJ intermediates. Cleaves cruciform DNA by making single-stranded nicks across the HJ at symmetrical positions within the homologous arms, yielding a 5'-phosphate and a 3'-hydroxyl group; requires a central core of homology in the junction. The consensus cleavage sequence is 5'-(A/T)TT(C/G)-3'. Cleavage occurs on the 3'-side of the TT dinucleotide at the point of strand exchange. HJ branch migration catalyzed by RuvA-RuvB allows RuvC to scan DNA until it finds its consensus sequence, where it cleaves and resolves the cruciform DNA. This chain is Crossover junction endodeoxyribonuclease RuvC, found in Thermotoga petrophila (strain ATCC BAA-488 / DSM 13995 / JCM 10881 / RKU-1).